We begin with the raw amino-acid sequence, 438 residues long: Xanthine permease (438 aa).

A run of 13 helical transmembrane segments spans residues 11-31 (LGIQ…LIVG), 41-61 (LTYL…LQVW), 65-85 (FFGI…SPMI), 100-120 (IIAS…LVSF), 121-141 (FPPV…MPVA), 154-174 (FGDL…VLLY), 180-200 (FIKS…AYFM), 220-240 (FYFG…IVAI), 272-292 (AEGL…TAFS), 308-328 (VIVV…IAAF), 331-351 (IIPS…VIAY), 367-387 (LLIV…PDIF), and 396-416 (LLTT…NIVY).

Belongs to the nucleobase:cation symporter-2 (NCS2) (TC 2.A.40) family.

Its subcellular location is the cell membrane. In terms of biological role, transport of xanthine in the cell. The protein is Xanthine permease (pbuX) of Bacillus subtilis (strain 168).